The chain runs to 527 residues: Probable pectinesterase/pectinesterase inhibitor 32 (527 aa).

The signal sequence occupies residues 1 to 24; sequence MAKFRQMGSSIFFLFLIIISLCSA. The tract at residues 25–165 is pectinesterase inhibitor 32; the sequence is HKEAFSSTDL…GTTVRNLLTM (141 aa). N-linked (GlcNAc...) asparagine glycosylation is found at Asn-110, Asn-209, Asn-224, and Asn-280. The interval 214–511 is pectinesterase 32; the sequence is DAVVAADGTG…FTVSQLIQGN (298 aa). Thr-289 and Gln-319 together coordinate substrate. Asp-342 (proton donor; for pectinesterase activity) is an active-site residue. Residues Cys-356 and Cys-376 are joined by a disulfide bond. Asp-363 serves as the catalytic Nucleophile; for pectinesterase activity. Asn-423 is a glycosylation site (N-linked (GlcNAc...) asparagine). Substrate is bound by residues Arg-431 and Trp-433. Asn-494 and Asn-501 each carry an N-linked (GlcNAc...) asparagine glycan.

In the N-terminal section; belongs to the PMEI family. It in the C-terminal section; belongs to the pectinesterase family. In terms of tissue distribution, expressed in siliques.

It localises to the secreted. The protein localises to the cell wall. It carries out the reaction [(1-&gt;4)-alpha-D-galacturonosyl methyl ester](n) + n H2O = [(1-&gt;4)-alpha-D-galacturonosyl](n) + n methanol + n H(+). The protein operates within glycan metabolism; pectin degradation; 2-dehydro-3-deoxy-D-gluconate from pectin: step 1/5. In terms of biological role, acts in the modification of cell walls via demethylesterification of cell wall pectin. The sequence is that of Probable pectinesterase/pectinesterase inhibitor 32 (PME32) from Arabidopsis thaliana (Mouse-ear cress).